The sequence spans 150 residues: Arginine repressor (150 aa).

The protein belongs to the ArgR family.

It is found in the cytoplasm. The protein operates within amino-acid biosynthesis; L-arginine biosynthesis [regulation]. Functionally, regulates arginine biosynthesis genes. The polypeptide is Arginine repressor (Carboxydothermus hydrogenoformans (strain ATCC BAA-161 / DSM 6008 / Z-2901)).